The primary structure comprises 1216 residues: Protein WWC3 (1216 aa).

A disordered region spans residues methionine 1–alanine 63. Residues glutamate 21–proline 51 are compositionally biased toward pro residues. WW domains are found at residues leucine 59–aspartate 92 and aspartate 106–glutamate 139. Coiled coils occupy residues lysine 164–glutamate 250 and aspartate 354–arginine 468. 3 disordered regions span residues valine 487 to glycine 508, glycine 546 to cysteine 612, and aspartate 634 to threonine 668. Residues proline 570 to proline 598 show a composition bias toward low complexity. One can recognise a C2 domain in the interval serine 722 to histidine 847. A coiled-coil region spans residues aspartate 885–serine 936. Residues serine 1060 to arginine 1079 are interaction with PRKCZ. The stretch at leucine 1091 to tyrosine 1160 forms a coiled coil.

The protein belongs to the WWC family. As to quaternary structure, forms homodimers and heterodimers with WWC1 and WWC2. Interacts with DLC1 and PRKCZ. Interacts (via WW domains) with LATS1 and LATS2.

The protein resides in the cytoplasm. It localises to the cytosol. In terms of biological role, regulator of the Hippo signaling pathway, also known as the Salvador-Warts-Hippo (SWH) pathway. Enhances phosphorylation of LATS1 and YAP1 and negatively regulates cell proliferation and organ growth due to a suppression of the transcriptional activity of YAP1, the major effector of the Hippo pathway. This is Protein WWC3 from Homo sapiens (Human).